We begin with the raw amino-acid sequence, 597 residues long: Kelch-like protein 21 (597 aa).

Positions 35–103 constitute a BTB domain; the sequence is LDVTLEAAGG…SYTGRVAVSG (69 aa). Residues 138 to 239 form the BACK domain; it reads CLDMQDFAEA…RRFYLLAHVE (102 aa). Kelch repeat units lie at residues 287–335, 336–382, 384–422, 423–470, 472–512, and 513–560; these read ILVL…ALGN, DIYV…VLDG, LYVVAADSTERYDHATDSWEALQPMTYPMDNCSTTACRG, RLYA…TLNG, MYFV…VLGG, and KLYV…SIFR. Residues 570–597 form a disordered region; the sequence is GRGFELNSGSNDVDAGYHRLPQNPEELH.

In terms of assembly, component of the BCR(KLHL21) E3 ubiquitin ligase complex, at least composed of CUL3, KLHL21 and RBX1.

The protein localises to the cytoplasm. It localises to the cytoskeleton. Its subcellular location is the spindle. It functions in the pathway protein modification; protein ubiquitination. Substrate-specific adapter of a BCR (BTB-CUL3-RBX1) E3 ubiquitin-protein ligase complex required for efficient chromosome alignment and cytokinesis. The BCR(KLHL21) E3 ubiquitin ligase complex regulates localization of the chromosomal passenger complex (CPC) from chromosomes to the spindle midzone in anaphase and mediates the ubiquitination of AURKB. Ubiquitination of AURKB by BCR(KLHL21) E3 ubiquitin ligase complex may not lead to its degradation by the proteasome. The chain is Kelch-like protein 21 (Klhl21) from Mus musculus (Mouse).